The chain runs to 297 residues: Thiosulfate sulfurtransferase (297 aa).

At Lys14 the chain carries N6-acetyllysine; alternate. An N6-succinyllysine; alternate modification is found at Lys14. Residues 25-143 (LGPGLRVLDA…WLKEGHPVTS (119 aa)) form the Rhodanese 1 domain. Residue Ser35 is glycosylated (O-linked (GlcNAc) serine). Ser38 is modified (phosphoserine). Lys136 bears the N6-acetyllysine; alternate mark. An N6-succinyllysine; alternate modification is found at Lys136. The interval 144–159 (EPSRPEPAVFKATLDR) is hinge. Lys163 bears the N6-acetyllysine mark. In terms of domain architecture, Rhodanese 2 spans 173 to 288 (QSKRFQLVDS…WFHQAPPETR (116 aa)). An N6-acetyllysine; alternate modification is found at Lys175. Lys175 bears the N6-succinyllysine; alternate mark. Arg187 contributes to the substrate binding site. At Lys224 the chain carries N6-acetyllysine; alternate. Lys224 bears the N6-succinyllysine; alternate mark. The residue at position 236 (Lys236) is an N6-acetyllysine. Position 237 is an N6-acetyllysine; alternate (Lys237). Lys237 bears the N6-succinyllysine; alternate mark. The active-site Cysteine persulfide intermediate is the Cys248. Lys250 contributes to the substrate binding site.

As to quaternary structure, monomer.

The protein resides in the mitochondrion matrix. The enzyme catalyses thiosulfate + hydrogen cyanide = thiocyanate + sulfite + 2 H(+). Together with MRPL18, acts as a mitochondrial import factor for the cytosolic 5S rRNA. Only the nascent unfolded cytoplasmic form is able to bind to the 5S rRNA. Formation of iron-sulfur complexes and cyanide detoxification. Binds molecular oxygen and sulfur. The chain is Thiosulfate sulfurtransferase (TST) from Cricetulus griseus (Chinese hamster).